We begin with the raw amino-acid sequence, 368 residues long: sn-1 linoleoyl-lipid 6-desaturase (368 aa).

The next 2 helical transmembrane spans lie at 47-67 (IILA…DVLW) and 68-88 (MKLL…FNIS). A Histidine box-1 motif is present at residues 89-93 (HDGNH). The short motif at 124 to 129 (HNVLHH) is the Histidine box-2 element. Helical transmembrane passes span 164–184 (WFIW…DVQT), 204–224 (IATL…IPIA), and 233–253 (VIGA…VFML). The short motif at 305–309 (HHLFP) is the Histidine box-3 element.

This sequence belongs to the fatty acid desaturase type 2 family. Requires Fe(2+) as cofactor.

Its subcellular location is the cell inner membrane. The protein resides in the cellular thylakoid membrane. It carries out the reaction a 1-[(9Z,12Z)-octadecdienoyl]-2-acyl-glycerolipid + 2 reduced [2Fe-2S]-[ferredoxin] + O2 + 2 H(+) = a 1-[(6Z,9Z,12Z)-octadectrienoyl]-2-acyl-glycerolipid + 2 oxidized [2Fe-2S]-[ferredoxin] + 2 H2O. Its pathway is lipid metabolism; polyunsaturated fatty acid biosynthesis. Its activity is regulated as follows. Activity requires ferredoxin, which is the natural electron donor, or cytochrome b5. In addition, activity is increased in the presence of the intermediate electron donors, NADPH and FADH(2). Functionally, desaturase involved in fatty acid biosynthesis. Introduces a double bond at carbon 6 of linoleoyl group (18:2) attached to the sn-1 position of the glycerol moiety of membrane glycerolipids, leading to the formation of gamma-linolenic acid (GLA). This is sn-1 linoleoyl-lipid 6-desaturase from Arthrospira platensis (Spirulina platensis).